A 39-amino-acid polypeptide reads, in one-letter code: uncharacterized protein (39 aa).

It belongs to the asfivirus C84L family.

This is an uncharacterized protein from African swine fever virus (isolate Warthog/Namibia/Wart80/1980) (ASFV).